A 5596-amino-acid chain; its full sequence is Midasin (5596 aa).

M1 carries the N-acetylmethionine modification. AAA-ATPase protomer regions lie at residues 307-591 (SVCK…TSKL), 659-978 (LIEQ…ASNP), 1048-1316 (KEPT…QEEI), and 1362-1616 (HIVW…NKMG). 329-336 (GPIGCGKT) serves as a coordination point for ATP. The tract at residues 517 to 537 (SSVGCEQAPEEVSEARRENKR) is disordered. Residues 677 to 684 (GETGTGKT) and 1084 to 1091 (GETSVGKT) contribute to the ATP site. T1177 is modified (phosphothreonine). Residue 1390 to 1397 (GDTGCGKT) coordinates ATP. An N6-acetyllysine modification is found at K1683. AAA-ATPase protomer regions lie at residues 1738 to 1995 (RLLR…AVFK) and 2053 to 2313 (MKCV…IYIS). ATP-binding positions include 1753–1760 (GSPGVGKT) and 2066–2073 (GPASVGKT). S1754 is subject to Phosphoserine. Residues 2418–4691 (SLRAHETWGD…EGEGMKDVSD (2274 aa)) are linker. Residues 3989–4008 (LVESDKEEQPDFLPRPTDGA) form a disordered region. Position 4212 is a phosphothreonine (T4212). S4538 carries the post-translational modification Phosphoserine. Disordered stretches follow at residues 4669-4688 (ATEFHDYEGGGIGEGEGMKD) and 4700-5260 (EDTF…SRES). The segment covering 4702 to 4724 (TFQKGQEKDKEDPDSKSDIKGED) has biased composition (basic and acidic residues). Acidic residues predominate over residues 4741-4757 (ELEEQEEDDEKSDSEGG). Phosphoserine occurs at positions 4752 and 4754. Residues 4758–4780 (DLDKHMGDLNGEEADKLDERLWG) show a composition bias toward basic and acidic residues. Residues 4781 to 4794 (DDDEEEDEEEEDNK) show a composition bias toward acidic residues. Positions 4822 to 4834 (NKDKSQQDKKEEK) are enriched in basic and acidic residues. Positions 4835-4844 (EEAEADDGGQ) are enriched in acidic residues. A compositionally biased stretch (basic and acidic residues) spans 4845–4855 (GEDKINEQIDE). Acidic residues predominate over residues 4877 to 4888 (EALDLPDDLNLD). Residue S4889 is modified to Phosphoserine. Acidic residues predominate over residues 4896-4908 (EDTDNEEGEEENP). T4898 is modified (phosphothreonine). Residues 4909 to 4928 (LEIKEKPEEAGHEAEERGET) are compositionally biased toward basic and acidic residues. Residues S4937 and S4946 each carry the phosphoserine modification. Residues 4940 to 4966 (EPEEGPSEDDKAEGEEEMDTGADDQDG) are compositionally biased toward acidic residues. A compositionally biased stretch (basic and acidic residues) spans 4968–4989 (AAQHPEEHSEEQQQSVEEKDKE). Positions 5007 to 5021 (QEEEEREDSDTEEQV) are enriched in acidic residues. S5015 is subject to Phosphoserine. Positions 5033–5046 (CGQTGVENMQNTQA) are enriched in polar residues. Over residues 5054–5064 (PEKEQGKEEHG) the composition is skewed to basic and acidic residues. A compositionally biased stretch (basic residues) spans 5088-5101 (KHTRKNTQSFKRKP). A compositionally biased stretch (basic and acidic residues) spans 5105–5115 (DNERSMGDHNE). Positions 5132-5141 (QGPAQQPQAQ) are enriched in low complexity. Residues 5181–5197 (QEEEEIEDTLMDTEEQE) are compositionally biased toward acidic residues. Basic and acidic residues-rich tracts occupy residues 5198-5213 (EFKAADVEQLKPEEIK) and 5233-5260 (KTEEDQDPRTDKAHKETENEKPERSRES). The VWFA domain maps to 5384 to 5583 (QICLAIDDSS…ALPETLSDAL (200 aa)).

The protein belongs to the midasin family. In terms of assembly, associates with pre-60S ribosomes in the nucleoplasm. Interacts (via its hexameric AAA ATPase ring) with the PELP1 complex (via PELP1); the interaction is regulated by SUMO conjugation of PELP1 and is crucial for recruitment of MDN1 to the pre-ribosomal particle. Interacts (via VWFA/MIDAS domain) with WDR12 (via UBL domain). Interacts (via VWFA/MIDAS domain) with NLE1 (via UBL domain).

It localises to the nucleus. Its subcellular location is the nucleolus. It is found in the nucleoplasm. The protein localises to the cytoplasm. Nuclear chaperone required for maturation and nuclear export of pre-60S ribosome subunits. Functions at successive maturation steps to remove ribosomal factors at critical transition points, first driving the exit of early pre-60S particles from the nucleolus and then driving late pre-60S particles from the nucleus. At an early stage in 60S maturation, mediates the dissociation of the PeBoW complex (PES1-BOP1-WDR12) from early pre-60S particles, rendering them competent for export from the nucleolus to the nucleoplasm. Subsequently recruited to the nucleoplasmic particles through interaction with SUMO-conjugated PELP1 complex. This binding is only possible if the 5S RNP at the central protuberance has undergone the rotation to complete its maturation. The chain is Midasin (MDN1) from Homo sapiens (Human).